A 511-amino-acid polypeptide reads, in one-letter code: Coatomer subunit delta (511 aa).

A compositionally biased stretch (basic and acidic residues) spans 167 to 177; the sequence is QQARRDAERQG. Positions 167 to 188 are disordered; sequence QQARRDAERQGKKAPGFGGFGS. Ser-223 carries the post-translational modification Phosphoserine. An N6-acetyllysine mark is found at Lys-233 and Lys-241. Ser-244 carries the post-translational modification Phosphoserine. An MHD domain is found at 271 to 511; it reads MESVHMKIEE…TFLVDKYEIL (241 aa). An N6-acetyllysine mark is found at Lys-309 and Lys-351. The residue at position 493 (Ser-493) is a Phosphoserine.

It belongs to the adaptor complexes medium subunit family. Delta-COP subfamily. Oligomeric complex that consists of at least the alpha, beta, beta', gamma, delta, epsilon and zeta subunits.

It localises to the cytoplasm. It is found in the golgi apparatus membrane. Its subcellular location is the cytoplasmic vesicle. The protein resides in the COPI-coated vesicle membrane. Functionally, the coatomer is a cytosolic protein complex that binds to dilysine motifs and reversibly associates with Golgi non-clathrin-coated vesicles, which further mediate biosynthetic protein transport from the ER, via the Golgi up to the trans Golgi network. Coatomer complex is required for budding from Golgi membranes, and is essential for the retrograde Golgi-to-ER transport of dilysine-tagged proteins. In mammals, the coatomer can only be recruited by membranes associated to ADP-ribosylation factors (ARFs), which are small GTP-binding proteins; the complex also influences the Golgi structural integrity, as well as the processing, activity, and endocytic recycling of LDL receptors. This is Coatomer subunit delta (ARCN1) from Pongo abelii (Sumatran orangutan).